The chain runs to 173 residues: Photosystem I assembly protein Ycf3 (173 aa).

3 TPR repeats span residues 35 to 68, 72 to 105, and 120 to 153; these read AYVY…EENS, SETL…NPNQ, and GRIA…NPGG.

Belongs to the Ycf3 family.

It localises to the cellular thylakoid membrane. Functionally, essential for the assembly of the photosystem I (PSI) complex. May act as a chaperone-like factor to guide the assembly of the PSI subunits. The sequence is that of Photosystem I assembly protein Ycf3 from Synechococcus sp. (strain CC9605).